The chain runs to 1898 residues: Receptor-type tyrosine-protein phosphatase F (1898 aa).

The first 29 residues, 1–29 (MTPEPAPGRTMVPLVPALVMLGLVAGAHG), serve as a signal peptide directing secretion. Residues 30–1254 (DSKPVFVKVP…QQQEEPELLW (1225 aa)) lie on the Extracellular side of the membrane. 3 consecutive Ig-like C2-type domains span residues 33-123 (PVFV…AKLS), 135-224 (PSID…ANLY), and 232-314 (PRFS…AQVT). An intrachain disulfide couples cysteine 54 to cysteine 107. Position 68-77 (68-77 (KKGKKVSSQR)) interacts with heparin. Asparagine 117 carries an N-linked (GlcNAc...) asparagine glycan. A disulfide bridge connects residues cysteine 156 and cysteine 207. Asparagine 250 and asparagine 295 each carry an N-linked (GlcNAc...) asparagine glycan. Cysteines 253 and 298 form a disulfide. Fibronectin type-III domains are found at residues 321-411 (PPID…TGEQ), 416-510 (PPRR…TQQG), 514-604 (QPAD…TAQS), 609-706 (PPQK…TDED), 711-810 (PPRK…TTGA), 811-905 (VPGR…PEDV), 909-1001 (FPQN…TMPV), and 1005-1089 (FAKN…TAPD). The interval 399–418 (PPSEAVRARTGEQAPSSPPR) is disordered. Residues 693-713 (GPESSPVLVRTDEDVPSGPPR) form a disordered region. Asparagine 721 carries an N-linked (GlcNAc...) asparagine glycan. Asparagine 941 and asparagine 957 each carry an N-linked (GlcNAc...) asparagine glycan. Residues 1255–1275 (VTGPVLAVILIVLIVIAILLF) form a helical membrane-spanning segment. Over 1276–1898 (KRKRTHSPSS…YLGSFDHYAT (623 aa)) the chain is Cytoplasmic. Serine 1296 bears the Phosphoserine mark. Tyrosine-protein phosphatase domains lie at 1343–1598 (FSQE…LLEA) and 1630–1889 (MELE…ALEY). Substrate is bound by residues aspartate 1507, 1539–1545 (CSAGVGR), and glutamine 1583. The active-site Phosphocysteine intermediate is the cysteine 1539. Cysteine 1830 acts as the Phosphocysteine intermediate in catalysis.

This sequence belongs to the protein-tyrosine phosphatase family. Receptor class 2A subfamily. Interacts with GRIP1. Interacts with PPFIA1, PPFIA2 and PPFIA3. Interacts with INSR.

It localises to the membrane. The enzyme catalyses O-phospho-L-tyrosyl-[protein] + H2O = L-tyrosyl-[protein] + phosphate. In terms of biological role, possible cell adhesion receptor. It possesses an intrinsic protein tyrosine phosphatase activity (PTPase) and dephosphorylates EPHA2 regulating its activity. Its function is as follows. The first PTPase domain has enzymatic activity, while the second one seems to affect the substrate specificity of the first one. In Bos taurus (Bovine), this protein is Receptor-type tyrosine-protein phosphatase F (PTPRF).